We begin with the raw amino-acid sequence, 571 residues long: Septation ring formation regulator EzrA (571 aa).

Residues 1–3 (MYY) lie on the Extracellular side of the membrane. Residues 4-22 (MLIGFIIVVIAIISAGYIL) traverse the membrane as a helical segment. The Cytoplasmic segment spans residues 23-571 (KRKHYQRINE…ESKVSVDDIE (549 aa)). Coiled coils occupy residues 169–214 (VETK…AQME), 249–298 (AQME…DTLE), 326–374 (DALA…ASGE), 400–438 (KFAE…RERL), and 474–529 (TQDW…ENHF).

The protein belongs to the EzrA family.

The protein localises to the cell membrane. Negative regulator of FtsZ ring formation; modulates the frequency and position of FtsZ ring formation. Inhibits FtsZ ring formation at polar sites. Interacts either with FtsZ or with one of its binding partners to promote depolymerization. The chain is Septation ring formation regulator EzrA from Listeria welshimeri serovar 6b (strain ATCC 35897 / DSM 20650 / CCUG 15529 / CIP 8149 / NCTC 11857 / SLCC 5334 / V8).